Reading from the N-terminus, the 547-residue chain is Solute carrier family 22 member 7 (547 aa).

12 helical membrane passes run 21 to 41 (VALLALPRVLLPMHFLLPIFL), 145 to 165 (ATSTFFFAGVLVGAVAFGYLS), 173 to 193 (LLLVAYVSALVLGLVSAASVS), 203 to 223 (LTGTALAGFTIIVMPLELEWL), 233 to 253 (VLSSTFWTGGVMLLALVGYLI), 258 to 278 (WLLLAVTLPCAPGILSLWWVP), 345 to 365 (ISLCCMVVWFGVNFSYYGLSL), 374 to 396 (VYQTQLLFGAVELPSKLLVYLSV), 403 to 423 (LTLAGTLLGTSLSLGFRLLVS), 431 to 451 (TALAVLGKGFSEAAFTTAYLF), 465 to 485 (MGLTALVGRLGGSLAPLAALL), and 492 to 512 (LPKLAYGGIALLAACTALLLP). Positions 521–547 (ETIQDVERKSAPSSLQEEEMPMKQVQD) are disordered.

The protein belongs to the major facilitator (TC 2.A.1) superfamily. Organic cation transporter (TC 2.A.1.19) family.

Its subcellular location is the basolateral cell membrane. It localises to the apical cell membrane. It is found in the cell membrane. It catalyses the reaction orotate(out) + L-glutamate(in) = orotate(in) + L-glutamate(out). It carries out the reaction 3',5'-cyclic GMP(in) = 3',5'-cyclic GMP(out). The enzyme catalyses GMP(in) = GMP(out). The catalysed reaction is 2'-deoxyguanosine(in) = 2'-deoxyguanosine(out). It catalyses the reaction GDP(in) = GDP(out). It carries out the reaction guanosine(in) = guanosine(out). The enzyme catalyses GTP(in) = GTP(out). The catalysed reaction is 3',5'-cyclic AMP(in) = 3',5'-cyclic AMP(out). It catalyses the reaction creatinine(in) = creatinine(out). It carries out the reaction prostaglandin E2(out) = prostaglandin E2(in). The enzyme catalyses 2-oxoglutarate(in) = 2-oxoglutarate(out). The catalysed reaction is glutarate(in) = glutarate(out). It catalyses the reaction urate(out) = urate(in). It carries out the reaction estrone 3-sulfate(out) = estrone 3-sulfate(in). In terms of biological role, functions as a Na(+)-independent bidirectional multispecific transporter. Contributes to the renal and hepatic elimination of endogenous organic compounds from the systemic circulation into the urine and bile, respectively. Capable of transporting a wide range of purine and pyrimidine nucleobases, nucleosides and nucleotides, with cGMP, 2'deoxyguanosine and GMP being the preferred substrates. Functions as a pH- and chloride-independent cGMP bidirectional facilitative transporter that can regulate both intracellular and extracellular levels of cGMP and may be involved in cGMP signaling pathways. Mediates orotate/glutamate bidirectional exchange and most likely display a physiological role in hepatic release of glutamate into the blood. Involved in renal secretion and possible reabsorption of creatinine. Able to uptake prostaglandin E2 (PGE2) and may contribute to PGE2 renal excretion. Also transports alpha-ketoglutarate and urate. Apart from the orotate/glutamate exchange, the counterions for the uptake of other SLC22A7/OAT2 substrates remain to be identified. This is Solute carrier family 22 member 7 (SLC22A7) from Sus scrofa (Pig).